We begin with the raw amino-acid sequence, 184 residues long: Prolyl-tRNA synthetase associated domain-containing protein 1 (184 aa).

It belongs to the PRORSD1 family.

The chain is Prolyl-tRNA synthetase associated domain-containing protein 1 (Prorsd1) from Danio rerio (Zebrafish).